The chain runs to 164 residues: S-ribosylhomocysteine lyase (164 aa).

3 residues coordinate Fe cation: His-61, His-65, and Cys-131.

This sequence belongs to the LuxS family. In terms of assembly, homodimer. Fe cation is required as a cofactor.

The enzyme catalyses S-(5-deoxy-D-ribos-5-yl)-L-homocysteine = (S)-4,5-dihydroxypentane-2,3-dione + L-homocysteine. Involved in the synthesis of autoinducer 2 (AI-2) which is secreted by bacteria and is used to communicate both the cell density and the metabolic potential of the environment. The regulation of gene expression in response to changes in cell density is called quorum sensing. Catalyzes the transformation of S-ribosylhomocysteine (RHC) to homocysteine (HC) and 4,5-dihydroxy-2,3-pentadione (DPD). This chain is S-ribosylhomocysteine lyase, found in Bifidobacterium longum (strain DJO10A).